The following is a 230-amino-acid chain: uncharacterized protein (230 aa).

A helical membrane pass occupies residues 17-37 (AGALSLGIGFFALASALWFLI). Asn126 is a glycosylation site (N-linked (GlcNAc...) asparagine).

It localises to the membrane. This is an uncharacterized protein from Mus musculus (Mouse).